A 500-amino-acid polypeptide reads, in one-letter code: NAD(P)H-quinone oxidoreductase chain 4, chloroplastic (500 aa).

The next 14 helical transmembrane spans lie at 4–24, 37–57, 87–107, 113–130, 134–154, 167–187, 211–231, 242–262, 272–292, 305–325, 330–350, 386–406, 416–436, and 462–482; these read FPWL…IFFL, ICIC…HFQL, IGPI…AWPV, LFHF…GLFS, LLLF…LLSM, FILY…GMGL, ILFY…IPLH, HYST…YGLV, AHSI…IYAA, IAYS…SITD, GAIL…FLAG, LALP…GIIT, ILIT…LLSM, and LFVS…PDFV.

The protein belongs to the complex I subunit 4 family.

Its subcellular location is the plastid. It localises to the chloroplast thylakoid membrane. It carries out the reaction a plastoquinone + NADH + (n+1) H(+)(in) = a plastoquinol + NAD(+) + n H(+)(out). It catalyses the reaction a plastoquinone + NADPH + (n+1) H(+)(in) = a plastoquinol + NADP(+) + n H(+)(out). The protein is NAD(P)H-quinone oxidoreductase chain 4, chloroplastic of Acorus calamus var. americanus (American sweet flag).